We begin with the raw amino-acid sequence, 206 residues long: Large ribosomal subunit protein uL3 (206 aa).

Residues 127-151 (SGGPSSHGSKFHRHLGGTGQATTPA) are disordered.

The protein belongs to the universal ribosomal protein uL3 family. Part of the 50S ribosomal subunit. Forms a cluster with proteins L14 and L19.

Functionally, one of the primary rRNA binding proteins, it binds directly near the 3'-end of the 23S rRNA, where it nucleates assembly of the 50S subunit. The chain is Large ribosomal subunit protein uL3 from Borreliella afzelii (strain PKo) (Borrelia afzelii).